Consider the following 70-residue polypeptide: Turripeptide Gsp9.3 (70 aa).

The first 20 residues, 1-20 (MKVYCLLLVLLVGLVSQAHG), serve as a signal peptide directing secretion. Positions 21 to 70 (QLDKKCQMVCTFDYRPVCGSDGRTYPNKCTLTSTACMSQRSITVFHDGEC) constitute a Kazal-like domain. 3 disulfides stabilise this stretch: C26/C56, C30/C49, and C38/C70.

Belongs to the conopeptide P-like superfamily. In terms of tissue distribution, expressed by the venom duct.

It is found in the secreted. Functionally, acts as a neurotoxin by inhibiting an ion channel. May also act as a serine protease inhibitor, since it possess the kazal serine protease inhibitor signature. This Gemmula speciosa (Splendid gem-turris) protein is Turripeptide Gsp9.3.